Here is an 860-residue protein sequence, read N- to C-terminus: Leucine--tRNA ligase (860 aa).

The short motif at 42 to 52 (PYPSGRLHMGH) is the 'HIGH' region element. The 'KMSKS' region signature appears at 619–623 (KMSKS). Residue Lys-622 coordinates ATP.

The protein belongs to the class-I aminoacyl-tRNA synthetase family.

Its subcellular location is the cytoplasm. The enzyme catalyses tRNA(Leu) + L-leucine + ATP = L-leucyl-tRNA(Leu) + AMP + diphosphate. The protein is Leucine--tRNA ligase of Yersinia pseudotuberculosis serotype I (strain IP32953).